We begin with the raw amino-acid sequence, 245 residues long: Small ribosomal subunit protein uS2 (245 aa).

It belongs to the universal ribosomal protein uS2 family.

The protein is Small ribosomal subunit protein uS2 of Dehalococcoides mccartyi (strain ATCC BAA-2266 / KCTC 15142 / 195) (Dehalococcoides ethenogenes (strain 195)).